A 336-amino-acid chain; its full sequence is UDP-3-O-acylglucosamine N-acyltransferase (336 aa).

Residue H233 is the Proton acceptor of the active site.

Belongs to the transferase hexapeptide repeat family. LpxD subfamily. As to quaternary structure, homotrimer.

It catalyses the reaction a UDP-3-O-[(3R)-3-hydroxyacyl]-alpha-D-glucosamine + a (3R)-hydroxyacyl-[ACP] = a UDP-2-N,3-O-bis[(3R)-3-hydroxyacyl]-alpha-D-glucosamine + holo-[ACP] + H(+). Its pathway is bacterial outer membrane biogenesis; LPS lipid A biosynthesis. Functionally, catalyzes the N-acylation of UDP-3-O-acylglucosamine using 3-hydroxyacyl-ACP as the acyl donor. Is involved in the biosynthesis of lipid A, a phosphorylated glycolipid that anchors the lipopolysaccharide to the outer membrane of the cell. In Helicobacter pylori (strain ATCC 700392 / 26695) (Campylobacter pylori), this protein is UDP-3-O-acylglucosamine N-acyltransferase.